The chain runs to 517 residues: ATP synthase subunit alpha (517 aa).

174 to 181 (GDRQTGKT) is a binding site for ATP.

The protein belongs to the ATPase alpha/beta chains family. F-type ATPases have 2 components, CF(1) - the catalytic core - and CF(0) - the membrane proton channel. CF(1) has five subunits: alpha(3), beta(3), gamma(1), delta(1), epsilon(1). CF(0) has four main subunits: a(1), b(1), b'(1) and c(9-12).

The protein resides in the cell inner membrane. It carries out the reaction ATP + H2O + 4 H(+)(in) = ADP + phosphate + 5 H(+)(out). Functionally, produces ATP from ADP in the presence of a proton gradient across the membrane. The alpha chain is a regulatory subunit. The protein is ATP synthase subunit alpha of Methylibium petroleiphilum (strain ATCC BAA-1232 / LMG 22953 / PM1).